The chain runs to 131 residues: Hydrogenase maturation factor HypA (131 aa).

Position 2 (His2) interacts with Ni(2+). Zn(2+) is bound by residues Cys73, Cys76, Cys105, and Cys108.

The protein belongs to the HypA/HybF family.

Involved in the maturation of [NiFe] hydrogenases. Required for nickel insertion into the metal center of the hydrogenase. This Thermomicrobium roseum (strain ATCC 27502 / DSM 5159 / P-2) protein is Hydrogenase maturation factor HypA.